The sequence spans 251 residues: Gamma-glutamyl peptidase 4 (251 aa).

The Glutamine amidotransferase type-1 domain occupies 16–213 (SEFAKKTYGG…IDRVLAGGHI (198 aa)). Cys-100 acts as the Nucleophile in catalysis. Residues His-192 and Glu-194 contribute to the active site.

The protein belongs to the peptidase C26 family.

It is found in the cytoplasm. The protein resides in the cytosol. It participates in secondary metabolite biosynthesis. Involved in glucosinolate biosynthesis. Hydrolyzes the gamma-glutamyl peptide bond of several glutathione (GSH) conjugates to produce Cys-Gly conjugates related to glucosinolates. The gamma-Glu-Cys-Gly-GSH conjugates are the sulfur-donating molecule in glucosinolate biosynthesis. The polypeptide is Gamma-glutamyl peptidase 4 (Arabidopsis thaliana (Mouse-ear cress)).